Here is a 1055-residue protein sequence, read N- to C-terminus: Leukotoxin (1055 aa).

The stretch at Gln11–Leu49 forms a coiled coil. Cholesterol recognition/amino acid consensus (CRAC) region regions lie at residues Leu334–Arg340 and Val502–Lys506. Hemolysin-type calcium-binding repeat units follow at residues Ile721 to Phe738, His739 to Leu756, Tyr757 to Leu774, Tyr775 to Leu792, Asp793 to Leu810, Arg811 to Leu828, and Asp829 to Tyr846. A disordered region spans residues Gly795–Gly815. Positions Lys990–Lys1009 are disordered. Over residues Ser993 to Leu1006 the composition is skewed to low complexity.

It belongs to the RTX prokaryotic toxin (TC 1.C.11) family. As to quaternary structure, interacts specifically with the superoxide dismutase [Cu-Zn]. This interaction may protect LtxA from reactive oxygen species and reactive nitrogen species produced by host inflammatory cells during disease. Interacts with the human leukocyte adhesion glycoprotein LFA-1 (ITGAL-ITGB2). Acylated at Lys-562 and Lys-687 by LtxC. This modification is required for full activity. Isolated methyl esters contain palmitoyl and palmitolyl fatty acyl groups with smaller quantities of myristic and stearic fatty acids.

It is found in the cell outer membrane. Its subcellular location is the secreted. Virulence factor that plays an important role in immune evasion. Lyses human lymphocytes and monocytes. Binds to the LFA-1 integrin on the surface of the host cell and to cholesterol-containing membranes, which probably results in large LtxA-LFA-1 clusters in lipid rafts. Also shows beta-hemolytic activity on certain types of growth media. The protein is Leukotoxin of Aggregatibacter actinomycetemcomitans (Actinobacillus actinomycetemcomitans).